The chain runs to 238 residues: U2 small nuclear ribonucleoprotein A' (238 aa).

4 LRR repeats span residues 19-40 (KQVT…GITK), 42-63 (TYEV…PRLK), 64-84 (NLKV…DKLP), and 89-110 (HLQS…RILC). The LRRCT domain maps to 123–161 (NPITDSPNYRYFIVWLIPTLKVLDFSKVKQKELVKAKEL).

It belongs to the U2 small nuclear ribonucleoprotein A family. As to quaternary structure, associated with the spliceosome.

The protein localises to the nucleus. Functionally, involved in pre-mRNA splicing. This is U2 small nuclear ribonucleoprotein A' (LEA1) from Debaryomyces hansenii (strain ATCC 36239 / CBS 767 / BCRC 21394 / JCM 1990 / NBRC 0083 / IGC 2968) (Yeast).